Reading from the N-terminus, the 256-residue chain is Pro-opiomelanocortin (256 aa).

Residues 1 to 26 (MPRSCYSRSGTLLLALLLQISMEVRG) form the signal peptide. A disulfide bridge links Cys-28 with Cys-50. An O-linked (GalNAc...) threonine glycan is attached at Thr-71. Phe-87 is modified (phenylalanine amide). The segment at 88 to 120 (GRGNSSGASQKREEEAAAADPGFHGDGVEPGLR) is disordered. N-linked (GlcNAc...) asparagine glycosylation is present at Asn-91. Residues 100-122 (EEEAAAADPGFHGDGVEPGLRED) constitute a propeptide that is removed on maturation. Position 125 is an N-acetylserine; in Corticotropin (Ser-125). Val-137 bears the Valine amide mark. Ser-155 carries the post-translational modification Phosphoserine.

The protein belongs to the POMC family. Post-translationally, specific enzymatic cleavages at paired basic residues yield the different active peptides. As to expression, ACTH and MSH are produced by the pituitary gland.

The protein localises to the secreted. Functionally, ACTH stimulates the adrenal glands to release cortisol. Its function is as follows. MSH (melanocyte-stimulating hormone) increases the pigmentation of skin by increasing melanin production in melanocytes. In terms of biological role, beta-endorphin and Met-enkephalin are endogenous opiates. Stimulates the adrenal glands to release cortisol. Functionally, anorexigenic peptide. Increases the pigmentation of skin by increasing melanin production in melanocytes. Its function is as follows. Increases the pigmentation of skin by increasing melanin production in melanocytes. In terms of biological role, endogenous orexigenic opiate. Endogenous opiate. In Cavia porcellus (Guinea pig), this protein is Pro-opiomelanocortin (POMC).